A 101-amino-acid polypeptide reads, in one-letter code: Putative regulatory protein PrgT (101 aa).

Its function is as follows. Might be involved in the expression of prgA, but is not required for activation of the expression of prgB. The polypeptide is Putative regulatory protein PrgT (prgT) (Enterococcus faecalis (strain ATCC 47077 / OG1RF)).